The primary structure comprises 307 residues: MKVKTAVAIAGLTLKNPVLTASGTVGFGEEYAPYLDLAGLGALVVKTVTLKPRAGNPPPRITETPAGVINAVGLQNPGVEALVRDILPRLARFDVPVIVSIAGETVDEYARLAGRLDGVPGIAALEVNISCPNVKAGGIAFGTEPAMTAAVVRQVRENTRLPVIAKLSPNVTDIRTIALAAAGAGADALSLINTLSAMVIDVERRRPLLGNVFGGLSGPAVRPVAVRAVWQVYQAVELPLIGMGGIMTARDALEFILAGARAVAVGTANLVNPGAAAAVAADLEQYLTEQGIRDINELVGAAHRTGG.

Residues Ser-22 and 46–47 contribute to the FMN site; that span reads KT. Substrate contacts are provided by residues Lys-46, 70–74, and Asn-128; that span reads NAVGL. Asn-128 lines the FMN pocket. The active-site Nucleophile is the Cys-131. FMN-binding residues include Lys-166 and Ile-192. A substrate-binding site is contributed by 193-194; it reads NT. Residues Gly-218, 244–245, and 266–267 each bind FMN; these read GG and GT.

Belongs to the dihydroorotate dehydrogenase family. Type 1 subfamily. In terms of assembly, heterotetramer of 2 PyrK and 2 PyrD type B subunits. The cofactor is FMN.

The protein resides in the cytoplasm. The enzyme catalyses (S)-dihydroorotate + NAD(+) = orotate + NADH + H(+). It participates in pyrimidine metabolism; UMP biosynthesis via de novo pathway; orotate from (S)-dihydroorotate (NAD(+) route): step 1/1. Functionally, catalyzes the conversion of dihydroorotate to orotate with NAD(+) as electron acceptor. The polypeptide is Dihydroorotate dehydrogenase B (NAD(+)), catalytic subunit (pyrD) (Desulforudis audaxviator (strain MP104C)).